Consider the following 195-residue polypeptide: Imidazoleglycerol-phosphate dehydratase (195 aa).

The protein belongs to the imidazoleglycerol-phosphate dehydratase family.

It is found in the cytoplasm. It catalyses the reaction D-erythro-1-(imidazol-4-yl)glycerol 3-phosphate = 3-(imidazol-4-yl)-2-oxopropyl phosphate + H2O. It participates in amino-acid biosynthesis; L-histidine biosynthesis; L-histidine from 5-phospho-alpha-D-ribose 1-diphosphate: step 6/9. The sequence is that of Imidazoleglycerol-phosphate dehydratase from Methylorubrum extorquens (strain CM4 / NCIMB 13688) (Methylobacterium extorquens).